We begin with the raw amino-acid sequence, 1102 residues long: GPI inositol-deacylase (1102 aa).

A disordered region spans residues methionine 1 to valine 90. Over residues glycine 58–tryptophan 70 the composition is skewed to polar residues. N-linked (GlcNAc...) asparagine glycosylation is present at asparagine 66. The segment covering threonine 72–proline 83 has biased composition (low complexity). The chain crosses the membrane as a helical span at residues proline 121–leucine 141. Serine 308 is a catalytic residue. 2 consecutive transmembrane segments (helical) span residues leucine 744–methionine 764 and serine 790–threonine 810. N-linked (GlcNAc...) asparagine glycosylation is present at asparagine 824. Transmembrane regions (helical) follow at residues valine 867–glycine 887, isoleucine 914–isoleucine 934, serine 964–alanine 984, valine 1001–proline 1021, methionine 1033–leucine 1053, and leucine 1056–leucine 1076.

This sequence belongs to the GPI inositol-deacylase family.

The protein resides in the endoplasmic reticulum membrane. Its function is as follows. Involved in inositol deacylation of GPI-anchored proteins which plays important roles in the quality control and ER-associated degradation of GPI-anchored proteins. This chain is GPI inositol-deacylase (bst1), found in Aspergillus oryzae (strain ATCC 42149 / RIB 40) (Yellow koji mold).